Reading from the N-terminus, the 370-residue chain is Histidinol-phosphate aminotransferase (370 aa).

K230 bears the N6-(pyridoxal phosphate)lysine mark.

Belongs to the class-II pyridoxal-phosphate-dependent aminotransferase family. Histidinol-phosphate aminotransferase subfamily. As to quaternary structure, homodimer. Pyridoxal 5'-phosphate serves as cofactor.

The enzyme catalyses L-histidinol phosphate + 2-oxoglutarate = 3-(imidazol-4-yl)-2-oxopropyl phosphate + L-glutamate. It functions in the pathway amino-acid biosynthesis; L-histidine biosynthesis; L-histidine from 5-phospho-alpha-D-ribose 1-diphosphate: step 7/9. The sequence is that of Histidinol-phosphate aminotransferase from Leptospira interrogans serogroup Icterohaemorrhagiae serovar Lai (strain 56601).